Here is a 462-residue protein sequence, read N- to C-terminus: Glycoprotein endo-alpha-1,2-mannosidase (462 aa).

Topologically, residues 1–8 (MAKFRRRT) are cytoplasmic. The chain crosses the membrane as a helical; Signal-anchor for type II membrane protein span at residues 9–29 (CIILALFILFIFSLMMGLKML). Residues 30-462 (RPNTATFGAP…YALDRQLPVS (433 aa)) lie on the Lumenal side of the membrane. A catalytic region spans residues 60–462 (DFQKSDRINS…YALDRQLPVS (403 aa)).

This sequence belongs to the glycosyl hydrolase 99 family. Undergoes proteolytic cleavage in the C-terminal region. As to expression, highly expressed in the liver and kidney. Expressed at lower levels in muscle, pancreas, heart, placenta, lung and brain.

The protein localises to the golgi apparatus membrane. It carries out the reaction N-{alpha-Glc-(1-&gt;3)-alpha-Man-(1-&gt;2)-alpha-Man-(1-&gt;2)-alpha-Man-(1-&gt;3)-[alpha-Man-(1-&gt;2)-alpha-Man-(1-&gt;3)-[alpha-Man-(1-&gt;2)-alpha-Man-(1-&gt;6)]-alpha-Man-(1-&gt;6)]-beta-Man-(1-&gt;4)-beta-GlcNAc-(1-&gt;4)-beta-GlcNAc}-L-asparaginyl-[protein] + H2O = alpha-D-glucosyl-(1-&gt;3)-D-mannopyranose + N(4)-{alpha-D-Man-(1-&gt;2)-alpha-D-Man-(1-&gt;3)-[alpha-D-Man-(1-&gt;2)-alpha-D-Man-(1-&gt;3)-[alpha-D-Man-(1-&gt;2)-alpha-D-Man-(1-&gt;6)]-alpha-D-Man-(1-&gt;6)]-beta-D-Man-(1-&gt;4)-beta-D-GlaNAc-(1-&gt;4)-beta-D-GlcNAc}-L-asparaginyl-[protein] (N-glucan mannose isomer 8A1,2,3B1,2). This Homo sapiens (Human) protein is Glycoprotein endo-alpha-1,2-mannosidase (MANEA).